The chain runs to 957 residues: Glycine dehydrogenase (decarboxylating) (957 aa).

Position 708 is an N6-(pyridoxal phosphate)lysine (K708).

This sequence belongs to the GcvP family. As to quaternary structure, the glycine cleavage system is composed of four proteins: P, T, L and H. Requires pyridoxal 5'-phosphate as cofactor.

The catalysed reaction is N(6)-[(R)-lipoyl]-L-lysyl-[glycine-cleavage complex H protein] + glycine + H(+) = N(6)-[(R)-S(8)-aminomethyldihydrolipoyl]-L-lysyl-[glycine-cleavage complex H protein] + CO2. The glycine cleavage system catalyzes the degradation of glycine. The P protein binds the alpha-amino group of glycine through its pyridoxal phosphate cofactor; CO(2) is released and the remaining methylamine moiety is then transferred to the lipoamide cofactor of the H protein. In Salmonella arizonae (strain ATCC BAA-731 / CDC346-86 / RSK2980), this protein is Glycine dehydrogenase (decarboxylating).